Here is a 520-residue protein sequence, read N- to C-terminus: Sodium-dependent dicarboxylate transporter SdcS (520 aa).

Helical transmembrane passes span 30 to 50 (AGQL…LLFF), 55 to 75 (LPWK…WWIT), 77 to 97 (AIPI…GHIL), 104 to 124 (SEYG…AIAM), 160 to 180 (SMFV…LAII), 207 to 227 (IGYA…PLII), 242 to 262 (FAKW…ITWL), 298 to 318 (KVVQ…EFLL), 323 to 343 (VTSS…LFII), 362 to 382 (ELPW…KGIS), 399 to 419 (GVSP…LTEV), 428 to 448 (MILP…LLLM), 452 to 472 (AMAA…AIIF), and 491 to 511 (LISA…VLGI).

The protein belongs to the SLC13A/DASS transporter (TC 2.A.47) family. NADC subfamily.

The protein localises to the cell membrane. Functionally, mediates the transport of the dicarboxylates fumarate, malate, and succinate across the cytoplasmic membrane via a Na(+)-electrochemical gradient. The polypeptide is Sodium-dependent dicarboxylate transporter SdcS (sdcS) (Staphylococcus aureus (strain USA300)).